A 125-amino-acid chain; its full sequence is Large ribosomal subunit protein bL12 (125 aa).

Belongs to the bacterial ribosomal protein bL12 family. In terms of assembly, homodimer. Part of the ribosomal stalk of the 50S ribosomal subunit. Forms a multimeric L10(L12)X complex, where L10 forms an elongated spine to which 2 to 4 L12 dimers bind in a sequential fashion. Binds GTP-bound translation factors.

In terms of biological role, forms part of the ribosomal stalk which helps the ribosome interact with GTP-bound translation factors. Is thus essential for accurate translation. This Gluconobacter oxydans (strain 621H) (Gluconobacter suboxydans) protein is Large ribosomal subunit protein bL12.